Reading from the N-terminus, the 285-residue chain is Probable endonuclease 4 (285 aa).

Zn(2+) contacts are provided by histidine 69, histidine 109, glutamate 145, aspartate 179, histidine 182, histidine 216, aspartate 229, histidine 231, and glutamate 261.

This sequence belongs to the AP endonuclease 2 family. Requires Zn(2+) as cofactor.

The enzyme catalyses Endonucleolytic cleavage to 5'-phosphooligonucleotide end-products.. Its function is as follows. Endonuclease IV plays a role in DNA repair. It cleaves phosphodiester bonds at apurinic or apyrimidinic (AP) sites, generating a 3'-hydroxyl group and a 5'-terminal sugar phosphate. In Salmonella typhi, this protein is Probable endonuclease 4.